Reading from the N-terminus, the 233-residue chain is Large ribosomal subunit protein uL2 (233 aa).

The disordered stretch occupies residues His194–Arg233. Residues Lys219–Arg233 show a composition bias toward basic residues.

It belongs to the universal ribosomal protein uL2 family. Part of the 50S ribosomal subunit. Forms a bridge to the 30S subunit in the 70S ribosome.

Functionally, one of the primary rRNA binding proteins. Required for association of the 30S and 50S subunits to form the 70S ribosome, for tRNA binding and peptide bond formation. It has been suggested to have peptidyltransferase activity; this is somewhat controversial. Makes several contacts with the 16S rRNA in the 70S ribosome. This chain is Large ribosomal subunit protein uL2, found in Picrophilus torridus (strain ATCC 700027 / DSM 9790 / JCM 10055 / NBRC 100828 / KAW 2/3).